The primary structure comprises 290 residues: N-acetylmannosamine kinase (290 aa).

Residues 6–13 (ALDIGGTK) and 132–139 (GVGGGIIL) each bind ATP. 4 residues coordinate Zn(2+): His-156, Cys-166, Cys-168, and Cys-173.

This sequence belongs to the ROK (NagC/XylR) family. NanK subfamily. In terms of assembly, homodimer.

It catalyses the reaction an N-acyl-D-mannosamine + ATP = an N-acyl-D-mannosamine 6-phosphate + ADP + H(+). The protein operates within amino-sugar metabolism; N-acetylneuraminate degradation; D-fructose 6-phosphate from N-acetylneuraminate: step 2/5. Its function is as follows. Catalyzes the phosphorylation of N-acetylmannosamine (ManNAc) to ManNAc-6-P. This is N-acetylmannosamine kinase from Yersinia pestis (strain Pestoides F).